Consider the following 989-residue polypeptide: Autotransporter adhesin/invasin TibA (989 aa).

The N-terminal stretch at 1–54 (MNKVYNTVWNESTGTWVVTSELTRKGGLRPRQIKRTVLAGLIAGLLMPSMPALA) is a signal peptide. 14 O-alpha-linked (D-glycero-D-manno-heptose) serine glycosylation sites follow: Ser-74, Ser-86, Ser-93, Ser-94, Ser-97, Ser-100, Ser-112, Ser-113, Ser-116, Ser-119, Ser-124, Ser-131, Ser-132, and Ser-135. 12 repeat units span residues 82–100 (TTINSGGKQYVSSGGSATS), 101–119 (TTINIGGVQHVSSGGSATS), 120–138 (STINSGGHQHVSSGGSATN), 139–157 (TTVNNGGRQTVFSGGSAMG), 158–176 (TIINSGGDQYVISGGSATS), 177–195 (ASVTSGARQFVSSGGIVKA), 196–214 (TSVNSGGRQYVRDGGSATD), 215–233 (TVLNNTGRQFVSSGGSAAK), 234–251 (TTINSGGGMYLYGGSATG), 252–270 (TSIYNGGRQYVSSGGSATN), 271–289 (TTVYSGGRQHVYIDGNVTE), and 290–308 (TTITSGGMLQVEAGGSASK). A 12 X 19 AA approximate repeats region spans residues 82 to 308 (TTINSGGKQY…QVEAGGSASK (227 aa)). A compositionally biased stretch (polar residues) spans 110 to 123 (HVSSGGSATSSTIN). The segment at 110–146 (HVSSGGSATSSTINSGGHQHVSSGGSATNTTVNNGGR) is disordered. Low complexity predominate over residues 124-135 (SGGHQHVSSGGS). A compositionally biased stretch (polar residues) spans 136 to 146 (ATNTTVNNGGR). Residues Ser-151, Ser-154, Ser-162, Ser-170, Ser-176, Ser-181, Ser-188, Ser-189, Ser-200, Ser-226, Ser-227, Ser-230, Ser-238, Ser-248, Ser-263, Ser-264, Ser-275, Ser-294, Ser-305, Ser-313, and Ser-322 are each glycosylated (O-alpha-linked (D-glycero-D-manno-heptose) serine). The disordered stretch occupies residues 623 to 686 (WYLKADTPPP…GTSSSPVRRT (64 aa)). Pro residues predominate over residues 629–638 (TPPPVTPPTN). A run of 8 repeats spans residues 639–643 (PDADN), 644–648 (PDAGN), 649–653 (PDAGN), 654–658 (PDAGN), 659–663 (PDAGN), 664–668 (PDAGK), 669–673 (PGTGK), and 674–678 (PDAGT). Low complexity predominate over residues 639–667 (PDADNPDAGNPDAGNPDAGNPDAGNPDAG). An 8 X 5 AA repeats of P-[DG]-[AGT]-[DGA]-[NKT] region spans residues 639–678 (PDADNPDAGNPDAGNPDAGNPDAGNPDAGKPGTGKPDAGT). An Autotransporter domain is found at 721-989 (NTRAPGGVWG…TGGVGFRINF (269 aa)).

Homohexamer. In terms of processing, glycosylated by TibC. Glycosylation is required for adhesion to and invasion of host cells. Glycosylation is dispensable for bacterial autoaggregation and biofilm formation.

The protein localises to the cell outer membrane. Functionally, mediates both adhesion to and invasion of human intestine epithelial cells. Also mediates bacterial cell aggregation via intercellular TibA-TibA interaction. Enhances biofilm formation. This is Autotransporter adhesin/invasin TibA from Escherichia coli O78:H11 (strain H10407 / ETEC).